A 174-amino-acid polypeptide reads, in one-letter code: Cuticle protein 1 (174 aa).

Positions 1 to 18 (MRFLIAFVAILGYASASA) are cleaved as a signal peptide.

The protein localises to the secreted. The polypeptide is Cuticle protein 1 (Lonomia obliqua (Moth)).